We begin with the raw amino-acid sequence, 406 residues long: MAKGEFIRTKPHVNVGTIGHVDHGKTTLTAALTYVAAAENPNVEVKDYGDIDKAPEERARGITINTAHVEYETAKRHYSHVDCPGHADYIKNMITGAAQMDGAILVVSAADGPMPQTREHILLARQVGVPYIVVFMNKVDMVDDPELLDLVEMEVRDLLNQYEFPGDEVPVIRGSALLALEEMHKNPKTKRGENEWVDKIWELLDAIDEYIPTPVRDVDKPFLMPVEDVFTITGRGTVATGRIERGKVKVGDEVEIVGLAPETRKTVVTGVEMHRKTLQEGIAGDNVGLLLRGVSREEVERGQVLAKPGSITPHTKFEASVYILKKEEGGRHTGFFTGYRPQFYFRTTDVTGVVRLPQGVEMVMPGDNVTFTVELIKPVALEEGLRFAIREGGRTVGAGVVTKILE.

Residues 10–215 (KPHVNVGTIG…AIDEYIPTPV (206 aa)) enclose the tr-type G domain. The interval 19-26 (GHVDHGKT) is G1. 19–26 (GHVDHGKT) is a binding site for GTP. T26 serves as a coordination point for Mg(2+). Residues 61–65 (GITIN) form a G2 region. Positions 82–85 (DCPG) are G3. GTP is bound by residues 82–86 (DCPGH) and 137–140 (NKVD). The G4 stretch occupies residues 137-140 (NKVD). The tract at residues 175 to 177 (SAL) is G5.

It belongs to the TRAFAC class translation factor GTPase superfamily. Classic translation factor GTPase family. EF-Tu/EF-1A subfamily. As to quaternary structure, monomer.

Its subcellular location is the cytoplasm. It carries out the reaction GTP + H2O = GDP + phosphate + H(+). In terms of biological role, GTP hydrolase that promotes the GTP-dependent binding of aminoacyl-tRNA to the A-site of ribosomes during protein biosynthesis. The polypeptide is Elongation factor Tu (Thermus aquaticus).